A 28-amino-acid polypeptide reads, in one-letter code: NU-theraphotoxin-Preg1a (28 aa).

3 disulfide bridges follow: Cys2–Cys19, Cys9–Cys22, and Cys18–Cys27.

Expressed by the venom gland.

It localises to the secreted. Toxin that acts as an agonist on melanocortin receptors (MC1R, MC3R, MC5R, MC5R). After binding to MC1R, the peptide activates the hMC1R/Gs pathway, but after binding to MC4R, it is not able to activate or antagonize the MC4R/Gs pathway. Inhibits melanocyte stimulating hormone (MSH)-binding to human receptors (Ki=1.8 uM to MC1R, Ki=19.8 uM to MC3R, Ki=7.1 uM to MC4R, Ki=10.0 uM to MC5R). This toxin is structurally unrelated to the natural agonists. This chain is NU-theraphotoxin-Preg1a, found in Poecilotheria regalis (Indian ornamental tree spider).